Reading from the N-terminus, the 362-residue chain is Golgi-resident adenosine 3',5'-bisphosphate 3'-phosphatase (362 aa).

Methionine 1 bears the N-acetylmethionine mark. The Cytoplasmic portion of the chain corresponds to 1 to 12 (MAPMGIRLSPLG). A helical transmembrane segment spans residues 13–33 (VAVFCLLGLGVLYHLYSGFLA). The Lumenal segment spans residues 34–362 (GRFSLFGLGG…LPDLEKTGHK (329 aa)). The tract at residues 88-109 (RESNVLHEKSKGKTREGADDKM) is disordered. Aspartate 113 serves as the catalytic Proton acceptor. Residues glutamate 136, aspartate 177, leucine 179, and aspartate 180 each contribute to the Mg(2+) site. The active-site Proton acceptor is the threonine 182. 2 residues coordinate AMP: serine 245 and histidine 248. An N-linked (GlcNAc...) asparagine glycan is attached at asparagine 262. AMP contacts are provided by glycine 271 and lysine 275. Residue aspartate 303 participates in Mg(2+) binding.

It belongs to the inositol monophosphatase superfamily. It depends on Mg(2+) as a cofactor. In terms of processing, contains N-linked glycan resistant to endoglycosydase H.

Its subcellular location is the golgi apparatus. The protein resides in the trans-Golgi network membrane. It catalyses the reaction adenosine 3',5'-bisphosphate + H2O = AMP + phosphate. The protein operates within sulfur metabolism. Its activity is regulated as follows. Strongly inhibited by lithium. Exhibits 3'-nucleotidase activity toward adenosine 3',5'-bisphosphate (PAP), namely hydrolyzes adenosine 3',5'-bisphosphate into adenosine 5'-monophosphate (AMP) and a phosphate. May play a role in the formation of skeletal elements derived through endochondral ossification, possibly by clearing adenosine 3',5'-bisphosphate produced by Golgi sulfotransferases during glycosaminoglycan sulfation. Has no activity toward 3'-phosphoadenosine 5'-phosphosulfate (PAPS) or inositol phosphate (IP) substrates including I(1)P, I(1,4)P2, I(1,3,4)P3, I(1,4,5)P3 and I(1,3,4,5)P4. The protein is Golgi-resident adenosine 3',5'-bisphosphate 3'-phosphatase (BPNT2) of Bos taurus (Bovine).